The chain runs to 550 residues: Chaperonin GroEL 1 (550 aa).

Residues 29 to 32 (TIGP), 86 to 90 (DGTTT), glycine 413, 477 to 479 (NAA), and aspartate 493 contribute to the ATP site. The segment at 524 to 550 (AVSDGDHGHSHGHGHSHGHSHPQGPGF) is disordered. Positions 533–543 (SHGHGHSHGHS) are enriched in basic residues.

This sequence belongs to the chaperonin (HSP60) family. In terms of assembly, forms a cylinder of 14 subunits composed of two heptameric rings stacked back-to-back. Interacts with the co-chaperonin GroES.

Its subcellular location is the cytoplasm. The enzyme catalyses ATP + H2O + a folded polypeptide = ADP + phosphate + an unfolded polypeptide.. Functionally, together with its co-chaperonin GroES, plays an essential role in assisting protein folding. The GroEL-GroES system forms a nano-cage that allows encapsulation of the non-native substrate proteins and provides a physical environment optimized to promote and accelerate protein folding. This is Chaperonin GroEL 1 from Frankia alni (strain DSM 45986 / CECT 9034 / ACN14a).